The sequence spans 157 residues: Probable succinate transporter subunit YjjB (157 aa).

A run of 4 helical transmembrane segments spans residues L8–F28, M50–V70, V87–I107, and F129–W149.

It belongs to the ThrE exporter (TC 2.A.79) family. In terms of assembly, the transporter is composed of YjjB and YjjP.

It localises to the cell inner membrane. Involved in succinate export with YjjP. Both proteins are required for export. This chain is Probable succinate transporter subunit YjjB, found in Escherichia coli O127:H6 (strain E2348/69 / EPEC).